Consider the following 542-residue polypeptide: CTP synthase (542 aa).

Residues 1–265 (MTRYVFITGG…DREILAHFQM (265 aa)) form an amidoligase domain region. Serine 13 lines the CTP pocket. Residue serine 13 coordinates UTP. Residues 14–19 (SLGKGL) and aspartate 71 each bind ATP. Residues aspartate 71 and glutamate 139 each coordinate Mg(2+). Residues 146 to 148 (DIE), 186 to 191 (KTKPTQ), and lysine 222 each bind CTP. Residues 186–191 (KTKPTQ) and lysine 222 contribute to the UTP site. 238–240 (RDV) is an ATP binding site. The 251-residue stretch at 291 to 541 (TIAIVGKYTG…IAAAIEQSRL (251 aa)) folds into the Glutamine amidotransferase type-1 domain. Glycine 353 contacts L-glutamine. Residue cysteine 380 is the Nucleophile; for glutamine hydrolysis of the active site. L-glutamine contacts are provided by residues 381-384 (FGMQ), glutamate 404, and arginine 469. Residues histidine 514 and glutamate 516 contribute to the active site.

It belongs to the CTP synthase family. Homotetramer.

The enzyme catalyses UTP + L-glutamine + ATP + H2O = CTP + L-glutamate + ADP + phosphate + 2 H(+). The catalysed reaction is L-glutamine + H2O = L-glutamate + NH4(+). It carries out the reaction UTP + NH4(+) + ATP = CTP + ADP + phosphate + 2 H(+). It participates in pyrimidine metabolism; CTP biosynthesis via de novo pathway; CTP from UDP: step 2/2. Its activity is regulated as follows. Allosterically activated by GTP, when glutamine is the substrate; GTP has no effect on the reaction when ammonia is the substrate. The allosteric effector GTP functions by stabilizing the protein conformation that binds the tetrahedral intermediate(s) formed during glutamine hydrolysis. Inhibited by the product CTP, via allosteric rather than competitive inhibition. Its function is as follows. Catalyzes the ATP-dependent amination of UTP to CTP with either L-glutamine or ammonia as the source of nitrogen. Regulates intracellular CTP levels through interactions with the four ribonucleotide triphosphates. The protein is CTP synthase of Methylorubrum populi (strain ATCC BAA-705 / NCIMB 13946 / BJ001) (Methylobacterium populi).